A 151-amino-acid polypeptide reads, in one-letter code: UPF0756 membrane protein lhv_0995 (151 aa).

The next 5 membrane-spanning stretches (helical) occupy residues 4–24 (WLFL…SLII), 25–45 (ATGV…LPVI), 52–72 (WGVT…QIGF), 78–98 (TFKS…AILS), and 115–135 (LVLG…GPVI).

Belongs to the UPF0756 family.

The protein resides in the cell membrane. The chain is UPF0756 membrane protein lhv_0995 from Lactobacillus helveticus (strain DPC 4571).